Consider the following 391-residue polypeptide: Somatostatin receptor type 1 (391 aa).

Residues methionine 1–serine 11 show a composition bias toward low complexity. The disordered stretch occupies residues methionine 1–threonine 49. At methionine 1–glycine 55 the chain is on the extracellular side. The N-linked (GlcNAc...) asparagine glycan is linked to asparagine 4. Residues cysteine 20–alanine 33 show a composition bias toward gly residues. 2 N-linked (GlcNAc...) asparagine glycosylation sites follow: asparagine 43 and asparagine 47. The helical transmembrane segment at serine 56 to leucine 83 threads the bilayer. The Cytoplasmic segment spans residues arginine 84 to asparagine 93. The helical transmembrane segment at isoleucine 94 to leucine 119 threads the bilayer. Topologically, residues arginine 120–arginine 130 are extracellular. A disulfide bridge links cysteine 129 with cysteine 207. Residues leucine 131–valine 152 traverse the membrane as a helical segment. At aspartate 153–lysine 174 the chain is on the cytoplasmic side. The chain crosses the membrane as a helical span at residues valine 175–serine 195. Over arginine 196 to tryptophan 218 the chain is Extracellular. The helical transmembrane segment at leucine 219–valine 243 threads the bilayer. The Cytoplasmic portion of the chain corresponds to leucine 244–threonine 269. Residues leucine 270 to phenylalanine 295 form a helical membrane-spanning segment. Topologically, residues alanine 296–threonine 302 are extracellular. A helical membrane pass occupies residues valine 303–serine 326. Over aspartate 327–leucine 391 the chain is Cytoplasmic. The S-palmitoyl cysteine moiety is linked to residue cysteine 338.

This sequence belongs to the G-protein coupled receptor 1 family. As to quaternary structure, interacts with SKB1.

It localises to the cell membrane. Functionally, receptor for somatostatin with higher affinity for somatostatin-14 than -28. This receptor is coupled via pertussis toxin sensitive G proteins to inhibition of adenylyl cyclase. In addition it stimulates phosphotyrosine phosphatase and Na(+)/H(+) exchanger via pertussis toxin insensitive G proteins. The chain is Somatostatin receptor type 1 (SSTR1) from Canis lupus familiaris (Dog).